Here is a 409-residue protein sequence, read N- to C-terminus: Glutamate--tRNA ligase 2 (409 aa).

Residues 9–19 carry the 'HIGH' region motif; that stretch reads PSPTGNLHIGG. Residues 198 to 202 carry the 'KMSKS' region motif; that stretch reads KLSKR. Position 201 (Lys201) interacts with ATP.

Belongs to the class-I aminoacyl-tRNA synthetase family. Glutamate--tRNA ligase type 1 subfamily. As to quaternary structure, monomer.

The protein resides in the cytoplasm. It catalyses the reaction tRNA(Glu) + L-glutamate + ATP = L-glutamyl-tRNA(Glu) + AMP + diphosphate. Functionally, catalyzes the attachment of glutamate to tRNA(Glu) in a two-step reaction: glutamate is first activated by ATP to form Glu-AMP and then transferred to the acceptor end of tRNA(Glu). The chain is Glutamate--tRNA ligase 2 from Neorickettsia sennetsu (strain ATCC VR-367 / Miyayama) (Ehrlichia sennetsu).